The chain runs to 177 residues: Adenine phosphoribosyltransferase (177 aa).

The protein belongs to the purine/pyrimidine phosphoribosyltransferase family. As to quaternary structure, homodimer.

The protein localises to the cytoplasm. It carries out the reaction AMP + diphosphate = 5-phospho-alpha-D-ribose 1-diphosphate + adenine. It functions in the pathway purine metabolism; AMP biosynthesis via salvage pathway; AMP from adenine: step 1/1. Its function is as follows. Catalyzes a salvage reaction resulting in the formation of AMP, that is energically less costly than de novo synthesis. This chain is Adenine phosphoribosyltransferase, found in Idiomarina loihiensis (strain ATCC BAA-735 / DSM 15497 / L2-TR).